A 224-amino-acid chain; its full sequence is Lipoprotein-releasing system ATP-binding protein LolD (224 aa).

The ABC transporter domain occupies 6-224 (LEFCNVSKFF…IVNHSLISSI (219 aa)). 43–50 (GASGVGKT) contributes to the ATP binding site.

Belongs to the ABC transporter superfamily. Lipoprotein translocase (TC 3.A.1.125) family. As to quaternary structure, the complex is composed of two ATP-binding proteins (LolD) and two transmembrane proteins (LolC and LolE).

It localises to the cell inner membrane. Functionally, part of the ABC transporter complex LolCDE involved in the translocation of mature outer membrane-directed lipoproteins, from the inner membrane to the periplasmic chaperone, LolA. Responsible for the formation of the LolA-lipoprotein complex in an ATP-dependent manner. The polypeptide is Lipoprotein-releasing system ATP-binding protein LolD (Neorickettsia sennetsu (strain ATCC VR-367 / Miyayama) (Ehrlichia sennetsu)).